Here is a 734-residue protein sequence, read N- to C-terminus: Photosystem I P700 chlorophyll a apoprotein A2 (734 aa).

Transmembrane regions (helical) follow at residues 46–69 (IFASHFGHLAIIFLWVSGNLFHVA), 135–158 (LYQGSIFLLILSALFLFAGWLHLQ), 175–199 (LNHHLAGLFGFSSLAWTGHLVHVAI), 273–291 (IAHHHLAIAVIFIIAGHMY), 330–353 (LHFQLALALASLGVVTSLVAQHMY), 369–395 (AALYTHHQYIATFIMCGAFAHGAIFLI), 417–439 (AIISHLSWVSLFLGFHTLGLYVH), and 517–535 (FLVHHAIALGLHTTTLILV). Positions 559 and 568 each coordinate [4Fe-4S] cluster. The next 2 helical transmembrane spans lie at 575-596 (AFYLAVFWALNTVGWVTFYWHW) and 643-665 (LSVWSWMFLFGHLIWATGFMFLI). Chlorophyll a contacts are provided by His-654, Met-662, and Tyr-670. Residue Trp-671 participates in phylloquinone binding. A helical transmembrane segment spans residues 707 to 727 (VVGLAHFTVGYFLTYAAFLIA).

Belongs to the PsaA/PsaB family. In terms of assembly, the PsaA/B heterodimer binds the P700 chlorophyll special pair and subsequent electron acceptors. PSI consists of a core antenna complex that captures photons, and an electron transfer chain that converts photonic excitation into a charge separation. The cyanobacterial PSI reaction center is composed of one copy each of PsaA,B,C,D,E,F,I,J,K,L,M and X, and forms trimeric complexes. PSI electron transfer chain: 5 chlorophyll a, 1 chlorophyll a', 2 phylloquinones and 3 4Fe-4S clusters. PSI core antenna: 90 chlorophyll a, 22 carotenoids, 3 phospholipids and 1 galactolipid. P700 is a chlorophyll a/chlorophyll a' dimer, A0 is one or more chlorophyll a, A1 is one or both phylloquinones and FX is a shared 4Fe-4S iron-sulfur center. is required as a cofactor.

It localises to the cellular thylakoid membrane. The catalysed reaction is reduced [plastocyanin] + hnu + oxidized [2Fe-2S]-[ferredoxin] = oxidized [plastocyanin] + reduced [2Fe-2S]-[ferredoxin]. In terms of biological role, psaA and PsaB bind P700, the primary electron donor of photosystem I (PSI), as well as the electron acceptors A0, A1 and FX. PSI is a plastocyanin/cytochrome c6-ferredoxin oxidoreductase, converting photonic excitation into a charge separation, which transfers an electron from the donor P700 chlorophyll pair to the spectroscopically characterized acceptors A0, A1, FX, FA and FB in turn. Oxidized P700 is reduced on the lumenal side of the thylakoid membrane by plastocyanin or cytochrome c6. This Synechococcus elongatus (strain ATCC 33912 / PCC 7942 / FACHB-805) (Anacystis nidulans R2) protein is Photosystem I P700 chlorophyll a apoprotein A2.